The sequence spans 201 residues: MSYVPIVIEQTSRGERAYDIYSRLLKERIIFVCSTVEDHMANLIVAQLLFLEAENPKKDVYMYINSPGGVVTAGLAIYDTMQYIKPKVATLCIGQACSMGSLLLCGGTQGMRYSLPHSRIMIHQPSGGYKGQATDIEIHAQETLKIKRLLNELYSKHTGQELKHIEKSMERDNFMSPEEAKKFGIIDNIISSRDVMTMSAK.

S98 acts as the Nucleophile in catalysis. Residue H123 is part of the active site.

Belongs to the peptidase S14 family. Fourteen ClpP subunits assemble into 2 heptameric rings which stack back to back to give a disk-like structure with a central cavity, resembling the structure of eukaryotic proteasomes.

Its subcellular location is the cytoplasm. It catalyses the reaction Hydrolysis of proteins to small peptides in the presence of ATP and magnesium. alpha-casein is the usual test substrate. In the absence of ATP, only oligopeptides shorter than five residues are hydrolyzed (such as succinyl-Leu-Tyr-|-NHMec, and Leu-Tyr-Leu-|-Tyr-Trp, in which cleavage of the -Tyr-|-Leu- and -Tyr-|-Trp bonds also occurs).. Functionally, cleaves peptides in various proteins in a process that requires ATP hydrolysis. Has a chymotrypsin-like activity. Plays a major role in the degradation of misfolded proteins. The sequence is that of ATP-dependent Clp protease proteolytic subunit from Rickettsia akari (strain Hartford).